Reading from the N-terminus, the 93-residue chain is Probable chloroethene reductive dehalogenase membrane anchor protein (93 aa).

3 helical membrane passes run 3 to 23 (AIYF…FTWF), 35 to 55 (WVLG…TYAS), and 64 to 84 (SAWI…LFAA).

This sequence belongs to the PceB family.

Its subcellular location is the cell membrane. In terms of biological role, may act as a membrane anchor for the chloroethene reductive dehalogenase VcrA. The chain is Probable chloroethene reductive dehalogenase membrane anchor protein from Dehalococcoides mccartyi (strain VS).